Reading from the N-terminus, the 478-residue chain is Lactate utilization protein B (478 aa).

4Fe-4S ferredoxin-type domains are found at residues 303–333 (GTEF…GHAY) and 352–381 (YDDH…LHEQ). Cysteine 312, cysteine 315, cysteine 318, cysteine 322, cysteine 365, cysteine 368, and cysteine 372 together coordinate [4Fe-4S] cluster.

Belongs to the LutB/YkgF family.

Is involved in L-lactate degradation and allows cells to grow with lactate as the sole carbon source. Has probably a role as an electron transporter during oxidation of L-lactate. This is Lactate utilization protein B from Oceanobacillus iheyensis (strain DSM 14371 / CIP 107618 / JCM 11309 / KCTC 3954 / HTE831).